A 527-amino-acid polypeptide reads, in one-letter code: GMP synthase [glutamine-hydrolyzing] (527 aa).

The Glutamine amidotransferase type-1 domain occupies 13–202 (TILVLDFGSQ…AVDICGAAQK (190 aa)). The Nucleophile role is filled by Cys-89. Residues His-176 and Glu-178 contribute to the active site. The GMPS ATP-PPase domain occupies 203–402 (WSMENFVDTE…MGIPHDLVWR (200 aa)). 231–237 (SGGVDST) is an ATP binding site. Residues Arg-304, Asp-464, Lys-519, and Glu-525 each contribute to the XMP site.

Homodimer. Mg(2+) is required as a cofactor.

It is found in the cytoplasm. Its subcellular location is the cytosol. It carries out the reaction XMP + L-glutamine + ATP + H2O = GMP + L-glutamate + AMP + diphosphate + 2 H(+). Its pathway is purine metabolism; GMP biosynthesis; GMP from XMP (L-Gln route): step 1/1. Its function is as follows. Catalyzes the conversion of xanthine monophosphate (XMP) to GMP in the presence of glutamine and ATP through an adenyl-XMP intermediate. The chain is GMP synthase [glutamine-hydrolyzing] (GUA1) from Yarrowia lipolytica (strain CLIB 122 / E 150) (Yeast).